The chain runs to 548 residues: Chaperonin GroEL (548 aa).

ATP contacts are provided by residues 30–33 (TLGP), Lys51, 87–91 (DGTTT), Gly415, 479–481 (NAA), and Asp495. Residues 524–548 (LPKEDKSSDSSSSPAGGMGGMGGMM) form a disordered region. The span at 539-548 (GGMGGMGGMM) shows a compositional bias: gly residues.

This sequence belongs to the chaperonin (HSP60) family. Forms a cylinder of 14 subunits composed of two heptameric rings stacked back-to-back. Interacts with the co-chaperonin GroES.

It localises to the cytoplasm. The enzyme catalyses ATP + H2O + a folded polypeptide = ADP + phosphate + an unfolded polypeptide.. Together with its co-chaperonin GroES, plays an essential role in assisting protein folding. The GroEL-GroES system forms a nano-cage that allows encapsulation of the non-native substrate proteins and provides a physical environment optimized to promote and accelerate protein folding. This is Chaperonin GroEL from Buchnera aphidicola subsp. Acyrthosiphon pisum (strain Tuc7).